The primary structure comprises 417 residues: Serine hydroxymethyltransferase (417 aa).

Residues Leu120 and 124–126 each bind (6S)-5,6,7,8-tetrahydrofolate; that span reads GHL. Lys229 carries the N6-(pyridoxal phosphate)lysine modification. 354–356 contributes to the (6S)-5,6,7,8-tetrahydrofolate binding site; it reads SPF.

This sequence belongs to the SHMT family. In terms of assembly, homodimer. It depends on pyridoxal 5'-phosphate as a cofactor.

It localises to the cytoplasm. The enzyme catalyses (6R)-5,10-methylene-5,6,7,8-tetrahydrofolate + glycine + H2O = (6S)-5,6,7,8-tetrahydrofolate + L-serine. It participates in one-carbon metabolism; tetrahydrofolate interconversion. Its pathway is amino-acid biosynthesis; glycine biosynthesis; glycine from L-serine: step 1/1. In terms of biological role, catalyzes the reversible interconversion of serine and glycine with tetrahydrofolate (THF) serving as the one-carbon carrier. This reaction serves as the major source of one-carbon groups required for the biosynthesis of purines, thymidylate, methionine, and other important biomolecules. Also exhibits THF-independent aldolase activity toward beta-hydroxyamino acids, producing glycine and aldehydes, via a retro-aldol mechanism. The protein is Serine hydroxymethyltransferase of Acinetobacter radioresistens.